Here is a 458-residue protein sequence, read N- to C-terminus: Alpha-1,3/1,6-mannosyltransferase ALG2 (458 aa).

Residues asparagine 57 and asparagine 169 are each glycosylated (N-linked (GlcNAc...) asparagine). Residues 438–458 traverse the membrane as a helical segment; that stretch reads NISIIYVVSIIFAVLLKVFVF.

It belongs to the glycosyltransferase group 1 family.

The protein resides in the endoplasmic reticulum membrane. The enzyme catalyses a beta-D-Man-(1-&gt;4)-beta-D-GlcNAc-(1-&gt;4)-alpha-D-GlcNAc-diphospho-di-trans,poly-cis-dolichol + GDP-alpha-D-mannose = an alpha-D-Man-(1-&gt;3)-beta-D-Man-(1-&gt;4)-beta-D-GlcNAc-(1-&gt;4)-alpha-D-GlcNAc-diphospho-di-trans,poly-cis-dolichol + GDP + H(+). It carries out the reaction an alpha-D-Man-(1-&gt;3)-beta-D-Man-(1-&gt;4)-beta-D-GlcNAc-(1-&gt;4)-alpha-D-GlcNAc-diphospho-di-trans,poly-cis-dolichol + GDP-alpha-D-mannose = an alpha-D-Man-(1-&gt;3)-[alpha-D-Man-(1-&gt;6)]-beta-D-Man-(1-&gt;4)-beta-D-GlcNAc-(1-&gt;4)-alpha-D-GlcNAc-diphospho-di-trans,poly-cis-dolichol + GDP + H(+). The protein operates within protein modification; protein glycosylation. Its function is as follows. Mannosylates Man(2)GlcNAc(2)-dolichol diphosphate and Man(1)GlcNAc(2)-dolichol diphosphate to form Man(3)GlcNAc(2)-dolichol diphosphate. In Candida glabrata (strain ATCC 2001 / BCRC 20586 / JCM 3761 / NBRC 0622 / NRRL Y-65 / CBS 138) (Yeast), this protein is Alpha-1,3/1,6-mannosyltransferase ALG2 (ALG2).